The sequence spans 1062 residues: Probable sucrose-phosphate synthase 3 (1062 aa).

Basic and acidic residues predominate over residues 113-122 (EREQGRRDAT). The interval 113 to 141 (EREQGRRDATEDLSEDLSEGEKGDGLGEI) is disordered. 3 positions are modified to phosphoserine: Ser126, Ser130, and Ser156. The segment at 715 to 735 (MDGDKPSLNGSLEPNSADPVK) is disordered.

The protein belongs to the glycosyltransferase 1 family. As to quaternary structure, homodimer or homotetramer.

The enzyme catalyses beta-D-fructose 6-phosphate + UDP-alpha-D-glucose = sucrose 6(F)-phosphate + UDP + H(+). It participates in glycan biosynthesis; sucrose biosynthesis; sucrose from D-fructose 6-phosphate and UDP-alpha-D-glucose: step 1/2. Activity is regulated by phosphorylation and moderated by concentration of metabolites and light. Functionally, plays a role in photosynthetic sucrose synthesis by catalyzing the rate-limiting step of sucrose biosynthesis from UDP-glucose and fructose- 6-phosphate. Involved in the regulation of carbon partitioning in the leaves of plants. May regulate the synthesis of sucrose and therefore play a major role as a limiting factor in the export of photoassimilates out of the leaf. Plays a role for sucrose availability that is essential for plant growth and fiber elongation. The sequence is that of Probable sucrose-phosphate synthase 3 (SPS3) from Arabidopsis thaliana (Mouse-ear cress).